The following is a 294-amino-acid chain: NAD kinase (294 aa).

Aspartate 74 (proton acceptor) is an active-site residue. Residues aspartate 74 to glycine 75, asparagine 148 to aspartate 149, arginine 159, arginine 176, aspartate 178, threonine 189 to serine 194, and glutamine 247 each bind NAD(+).

Belongs to the NAD kinase family. It depends on a divalent metal cation as a cofactor.

The protein resides in the cytoplasm. The catalysed reaction is NAD(+) + ATP = ADP + NADP(+) + H(+). In terms of biological role, involved in the regulation of the intracellular balance of NAD and NADP, and is a key enzyme in the biosynthesis of NADP. Catalyzes specifically the phosphorylation on 2'-hydroxyl of the adenosine moiety of NAD to yield NADP. The sequence is that of NAD kinase from Azoarcus sp. (strain BH72).